A 289-amino-acid chain; its full sequence is MENEFTYEDYETTAKWLLQHTEYRPQVAVICGSGLGGLTAHLKEAQIFDYNEIPNFPQSTVQGHAGRLVFGLLNGRCCVMMQGRFHMYEGYSLSKVTFPVRVFHLLGVETLVVTNAAGGLNPNFEVGDIMLIRDHINLPGFCGQNPLRGPNDERFGVRFPAMSDAYDRDMRQKAFTAWKQMGEQRKLQEGTYVMLAGPNFETVAESRLLKMLGADAVGMSTVPEVIVARHCGLRVFGFSLITNKVVMDYENLEKANHMEVLDAGKAAAQTLERFVSILMESIPLPDRGS.

At Met1 the chain carries N-acetylmethionine. Residues Ser33, His64, and 84 to 86 each bind phosphate; that span reads RFH. Tyr88 provides a ligand contact to a purine D-ribonucleoside. A phosphate-binding site is contributed by Ala116. Residues Glu201 and Met219 each contribute to the a purine D-ribonucleoside site. Position 220 (Ser220) interacts with phosphate. A purine D-ribonucleoside-binding residues include Asn243 and His257.

It belongs to the PNP/MTAP phosphorylase family. In terms of assembly, homotrimer.

The protein localises to the cytoplasm. The catalysed reaction is inosine + phosphate = alpha-D-ribose 1-phosphate + hypoxanthine. It carries out the reaction guanosine + phosphate = alpha-D-ribose 1-phosphate + guanine. The enzyme catalyses 2'-deoxyguanosine + phosphate = 2-deoxy-alpha-D-ribose 1-phosphate + guanine. It catalyses the reaction 2'-deoxyinosine + phosphate = 2-deoxy-alpha-D-ribose 1-phosphate + hypoxanthine. It participates in purine metabolism; purine nucleoside salvage. Catalyzes the phosphorolytic breakdown of the N-glycosidic bond in the beta-(deoxy)ribonucleoside molecules, with the formation of the corresponding free purine bases and pentose-1-phosphate. Preferentially acts on 6-oxopurine nucleosides including inosine and guanosine. This chain is Purine nucleoside phosphorylase (Pnp), found in Mus musculus (Mouse).